The following is an 85-amino-acid chain: Beta-insect depressant toxin LqhIT2 (85 aa).

The first 21 residues, 1–21, serve as a signal peptide directing secretion; it reads MKLLLLLIVSASMLIESLVNA. Residues 22–82 enclose the LCN-type CS-alpha/beta domain; the sequence is DGYIKRRDGC…TWKSETNTCG (61 aa). Intrachain disulfides connect cysteine 31–cysteine 81, cysteine 35–cysteine 56, cysteine 42–cysteine 63, and cysteine 46–cysteine 65. At glycine 82 the chain carries Glycine amide.

It belongs to the long (4 C-C) scorpion toxin superfamily. Sodium channel inhibitor family. Beta subfamily. Expressed by the venom gland.

It is found in the secreted. Depressant insect beta-toxins cause a transient contraction paralysis followed by a slow flaccid paralysis. They bind voltage-independently at site-4 of sodium channels (Nav) and shift the voltage of activation toward more negative potentials thereby affecting sodium channel activation and promoting spontaneous and repetitive firing. This toxin is active only on insects. The protein is Beta-insect depressant toxin LqhIT2 of Leiurus hebraeus (Hebrew deathstalker scorpion).